We begin with the raw amino-acid sequence, 446 residues long: GTPase Der (446 aa).

2 EngA-type G domains span residues 3–167 (PVLA…AFDE) and 180–353 (IRLA…ASAT). GTP-binding positions include 9-16 (GRPNVGKS), 56-60 (DTGGF), 119-122 (NKAE), 186-193 (GRPNVGKS), 233-237 (DTAGL), and 298-301 (NKWD). Positions 354-438 (KKLATPVLTR…PMRIEMKSSR (85 aa)) constitute a KH-like domain.

Belongs to the TRAFAC class TrmE-Era-EngA-EngB-Septin-like GTPase superfamily. EngA (Der) GTPase family. In terms of assembly, associates with the 50S ribosomal subunit.

Its function is as follows. GTPase that plays an essential role in the late steps of ribosome biogenesis. The protein is GTPase Der of Methylibium petroleiphilum (strain ATCC BAA-1232 / LMG 22953 / PM1).